Reading from the N-terminus, the 159-residue chain is MEDTLGSEHSVCLSSWDWKNTAGAFELHSVSSPHSLSPTPSFESYSSSPCPAAAETPYSGGGLVGYGLVDFPPAYLPSPGQARLPKGTKVRMSAQRRRKASEREKLRMRTLADALHTLRNYLPPAYSQRGQPLTKIQTLKCTIKYISELTELLNSVKRA.

The tract at residues 79-101 is disordered; that stretch reads PGQARLPKGTKVRMSAQRRRKAS. The span at 86 to 100 shows a compositional bias: basic residues; sequence KGTKVRMSAQRRRKA. Positions 95–149 constitute a bHLH domain; it reads QRRRKASEREKLRMRTLADALHTLRNYLPPAYSQRGQPLTKIQTLKCTIKYISEL.

It is found in the nucleus. Involved in specifying the paraxial, but not dorsal, mesoderm. May regulate the expression of T-box transcription factors required for mesoderm formation and differentiation. This chain is Mesogenin-1 (MSGN1), found in Gallus gallus (Chicken).